The primary structure comprises 104 residues: L-rhamnose mutarotase (104 aa).

Tyrosine 18 provides a ligand contact to substrate. Residue histidine 22 is the Proton donor of the active site. Substrate contacts are provided by residues tyrosine 41 and 76-77 (WW).

This sequence belongs to the rhamnose mutarotase family. In terms of assembly, homodimer.

The protein localises to the cytoplasm. It carries out the reaction alpha-L-rhamnose = beta-L-rhamnose. The protein operates within carbohydrate metabolism; L-rhamnose metabolism. Involved in the anomeric conversion of L-rhamnose. This Escherichia coli O127:H6 (strain E2348/69 / EPEC) protein is L-rhamnose mutarotase.